Here is a 316-residue protein sequence, read N- to C-terminus: N-acetyl-gamma-glutamyl-phosphate reductase (316 aa).

The active site involves Cys-136.

The protein belongs to the NAGSA dehydrogenase family. Type 1 subfamily.

The protein localises to the cytoplasm. It catalyses the reaction N-acetyl-L-glutamate 5-semialdehyde + phosphate + NADP(+) = N-acetyl-L-glutamyl 5-phosphate + NADPH + H(+). The protein operates within amino-acid biosynthesis; L-arginine biosynthesis; N(2)-acetyl-L-ornithine from L-glutamate: step 3/4. Catalyzes the NADPH-dependent reduction of N-acetyl-5-glutamyl phosphate to yield N-acetyl-L-glutamate 5-semialdehyde. This Xanthomonas campestris pv. campestris (strain B100) protein is N-acetyl-gamma-glutamyl-phosphate reductase.